Here is a 79-residue protein sequence, read N- to C-terminus: Envelope small membrane protein (79 aa).

At 1-16 (MYDIVGTNNSILIANV) the chain is on the virion surface side. Residues 17 to 37 (LVLIIICLLVVIVGCALLLIL) traverse the membrane as a helical segment. The Intravirion segment spans residues 38 to 75 (QFVFGVCGFVFKFVCKPTILVYNKFRNESLLNEREELL).

This sequence belongs to the betacoronaviruses E protein family. As to quaternary structure, homopentamer. Interacts with membrane protein M in the budding compartment of the host cell, which is located between endoplasmic reticulum and the Golgi complex. Interacts with Nucleoprotein.

It is found in the host Golgi apparatus membrane. Its function is as follows. Plays a central role in virus morphogenesis and assembly. Acts as a viroporin and self-assembles in host membranes forming pentameric protein-lipid pores that allow ion transport. Also plays a role in the induction of apoptosis. This is Envelope small membrane protein from Rousettus leschenaultii (Leschenault's rousette).